Consider the following 65-residue polypeptide: Large ribosomal subunit protein bL35 (65 aa).

This sequence belongs to the bacterial ribosomal protein bL35 family.

The protein is Large ribosomal subunit protein bL35 of Buchnera aphidicola subsp. Cinara cedri (strain Cc).